Here is a 438-residue protein sequence, read N- to C-terminus: Serine hydroxymethyltransferase (438 aa).

(6S)-5,6,7,8-tetrahydrofolate is bound by residues Leu133 and 137-139; that span reads GHL. Lys242 carries the N6-(pyridoxal phosphate)lysine modification.

The protein belongs to the SHMT family. In terms of assembly, homodimer. It depends on pyridoxal 5'-phosphate as a cofactor.

It localises to the cytoplasm. It carries out the reaction (6R)-5,10-methylene-5,6,7,8-tetrahydrofolate + glycine + H2O = (6S)-5,6,7,8-tetrahydrofolate + L-serine. The protein operates within one-carbon metabolism; tetrahydrofolate interconversion. It participates in amino-acid biosynthesis; glycine biosynthesis; glycine from L-serine: step 1/1. Functionally, catalyzes the reversible interconversion of serine and glycine with tetrahydrofolate (THF) serving as the one-carbon carrier. This reaction serves as the major source of one-carbon groups required for the biosynthesis of purines, thymidylate, methionine, and other important biomolecules. Also exhibits THF-independent aldolase activity toward beta-hydroxyamino acids, producing glycine and aldehydes, via a retro-aldol mechanism. This Brucella suis (strain ATCC 23445 / NCTC 10510) protein is Serine hydroxymethyltransferase.